A 262-amino-acid chain; its full sequence is uncharacterized protein (262 aa).

It belongs to the AB hydrolase superfamily. AB hydrolase 2 family.

This is an uncharacterized protein from Mycosarcoma maydis (Corn smut fungus).